The chain runs to 187 residues: Acireductone dioxygenase 4 (187 aa).

Position 2 is an N-acetylalanine (Ala2). The Fe(2+) site is built by His89, His91, Glu95, and His134. Ni(2+) is bound by residues His89, His91, Glu95, and His134.

The protein belongs to the acireductone dioxygenase (ARD) family. Fe(2+) is required as a cofactor. Ni(2+) serves as cofactor.

It is found in the cytoplasm. The protein resides in the nucleus. The catalysed reaction is 1,2-dihydroxy-5-(methylsulfanyl)pent-1-en-3-one + O2 = 4-methylsulfanyl-2-oxobutanoate + formate + 2 H(+). It carries out the reaction 1,2-dihydroxy-5-(methylsulfanyl)pent-1-en-3-one + O2 = 3-(methylsulfanyl)propanoate + CO + formate + 2 H(+). It participates in amino-acid biosynthesis; L-methionine biosynthesis via salvage pathway; L-methionine from S-methyl-5-thio-alpha-D-ribose 1-phosphate: step 5/6. In terms of biological role, catalyzes 2 different reactions between oxygen and the acireductone 1,2-dihydroxy-3-keto-5-methylthiopentene (DHK-MTPene) depending upon the metal bound in the active site. Fe-containing acireductone dioxygenase (Fe-ARD) produces formate and 2-keto-4-methylthiobutyrate (KMTB), the alpha-ketoacid precursor of methionine in the methionine recycle pathway. Ni-containing acireductone dioxygenase (Ni-ARD) produces methylthiopropionate, carbon monoxide and formate, and does not lie on the methionine recycle pathway. The polypeptide is Acireductone dioxygenase 4 (ARD4) (Arabidopsis thaliana (Mouse-ear cress)).